Here is a 458-residue protein sequence, read N- to C-terminus: MSSSIKEVQGAPVKWVTNWTPEAIRGLVDQEKGLLDPRIYADQSLYELELERVFGRSWLLLGHESHVPETGDFLATYMGEDPVVMVRQKDKSIKVFLNQCRHRGMRICRSDAGNAKAFTCSYHGWAYDIAGKLVNVPFEKEAFCDKKEGDCGFDKAEWGPLQARVATYKGLVFANWDVQAPDLETYLGDARPYMDVMLDRTPAGTVAIGGMQKWVIPCNWKFAAEQFCSDMYHAGTMSHLSGILAGMPPEMDLSHAQVPTKGNQFRAGWGGHGSGWFVDEPGMLMAVMGPKVTQYWTEGPAADLAEQRLGHTMPVRRMFGQHMSVFPTCSFLPAINTIRTWHPRGPNEIEVWAFTLVDADAPAEIKEEYRRHNIRTFSAGGVFEQDDGENWVEIQKGLRGYKAKSQPLNAQMGLGRSQTGHPDFPGNVGYVYAEEAARGMYHHWMRMMSEPSWATLKP.

A Rieske domain is found at W58–A156. C100, H102, C120, and H123 together coordinate [2Fe-2S] cluster. Positions 233 and 239 each coordinate Fe cation.

Belongs to the bacterial ring-hydroxylating dioxygenase alpha subunit family. In terms of assembly, heterohexamer consisting of three BphA subunits and three BphE subunits. A ferredoxin (BphF) and a ferredoxin reductase (BphG) must be present to obtain activity. It depends on [2Fe-2S] cluster as a cofactor. The cofactor is Fe cation.

The catalysed reaction is biphenyl + NADH + O2 + H(+) = (2R,3S)-3-phenylcyclohexa-3,5-diene-1,2-diol + NAD(+). Its pathway is xenobiotic degradation; biphenyl degradation; 2-hydroxy-2,4-pentadienoate and benzoate from biphenyl: step 1/4. The polypeptide is Biphenyl dioxygenase subunit alpha (bphA) (Metapseudomonas furukawaii (Pseudomonas furukawaii)).